Consider the following 266-residue polypeptide: Undecaprenyl-diphosphatase (266 aa).

7 helical membrane passes run 38 to 58, 80 to 100, 108 to 128, 136 to 156, 176 to 196, 217 to 237, and 245 to 265; these read SDMF…IIYW, LIVA…VLHF, PIAW…WAAA, ITWL…IFPG, AAAT…ASGY, IAFV…LAYI, and FAVY…TGLI.

Belongs to the UppP family.

Its subcellular location is the cell inner membrane. It catalyses the reaction di-trans,octa-cis-undecaprenyl diphosphate + H2O = di-trans,octa-cis-undecaprenyl phosphate + phosphate + H(+). Catalyzes the dephosphorylation of undecaprenyl diphosphate (UPP). Confers resistance to bacitracin. The sequence is that of Undecaprenyl-diphosphatase from Rhizobium leguminosarum bv. trifolii (strain WSM2304).